Consider the following 552-residue polypeptide: CTP synthase (552 aa).

The segment at 1–270 is amidoligase domain; it reads MTKYVFVTGG…DRIICEELKL (270 aa). Ser-13 lines the CTP pocket. A UTP-binding site is contributed by Ser-13. ATP contacts are provided by residues 14 to 19 and Asp-71; that span reads SLGKGI. Mg(2+)-binding residues include Asp-71 and Glu-144. CTP is bound by residues 151–153, 191–196, and Lys-227; these read DIE and KTKPTQ. UTP-binding positions include 191–196 and Lys-227; that span reads KTKPTQ. Positions 295-547 constitute a Glutamine amidotransferase type-1 domain; the sequence is TIGMVGKYVD…VEAALANKQA (253 aa). Residue Gly-356 coordinates L-glutamine. Cys-383 acts as the Nucleophile; for glutamine hydrolysis in catalysis. Residues 384–387, Glu-407, and Arg-473 contribute to the L-glutamine site; that span reads LGMQ. Residues His-520 and Glu-522 contribute to the active site.

The protein belongs to the CTP synthase family. Homotetramer.

The enzyme catalyses UTP + L-glutamine + ATP + H2O = CTP + L-glutamate + ADP + phosphate + 2 H(+). It catalyses the reaction L-glutamine + H2O = L-glutamate + NH4(+). It carries out the reaction UTP + NH4(+) + ATP = CTP + ADP + phosphate + 2 H(+). Its pathway is pyrimidine metabolism; CTP biosynthesis via de novo pathway; CTP from UDP: step 2/2. Allosterically activated by GTP, when glutamine is the substrate; GTP has no effect on the reaction when ammonia is the substrate. The allosteric effector GTP functions by stabilizing the protein conformation that binds the tetrahedral intermediate(s) formed during glutamine hydrolysis. Inhibited by the product CTP, via allosteric rather than competitive inhibition. In terms of biological role, catalyzes the ATP-dependent amination of UTP to CTP with either L-glutamine or ammonia as the source of nitrogen. Regulates intracellular CTP levels through interactions with the four ribonucleotide triphosphates. The polypeptide is CTP synthase (Burkholderia cenocepacia (strain ATCC BAA-245 / DSM 16553 / LMG 16656 / NCTC 13227 / J2315 / CF5610) (Burkholderia cepacia (strain J2315))).